The sequence spans 404 residues: 6-deoxyerythronolide B hydroxylase (404 aa).

Residue Cys-351 coordinates heme.

This sequence belongs to the cytochrome P450 family. Requires heme as cofactor.

It localises to the cytoplasm. It catalyses the reaction 6-deoxyerythronolide B + 2 reduced [2Fe-2S]-[ferredoxin] + O2 + 2 H(+) = erythronolide B + 2 oxidized [2Fe-2S]-[ferredoxin] + H2O. The protein operates within antibiotic biosynthesis; erythromycin biosynthesis. Its function is as follows. Catalyzes the conversion of 6-deoxyerythronolide B (6-DEB) to erythronolide B (EB) by the insertion of an oxygen at the 6S position of 6-DEB. Requires the participation of a ferredoxin and a ferredoxin reductase for the transfer of electrons from NADPH to the monooxygenase. The sequence is that of 6-deoxyerythronolide B hydroxylase from Saccharopolyspora erythraea (strain ATCC 11635 / DSM 40517 / JCM 4748 / NBRC 13426 / NCIMB 8594 / NRRL 2338).